Consider the following 545-residue polypeptide: CTP synthase (545 aa).

Residues 1-266 (MTTNYIFVTG…DDYICKRFSL (266 aa)) form an amidoligase domain region. Ser14 lines the CTP pocket. Residue Ser14 participates in UTP binding. Residues 15 to 20 (SLGKGI) and Asp72 each bind ATP. Residues Asp72 and Glu140 each contribute to the Mg(2+) site. CTP-binding positions include 147–149 (DIE), 187–192 (KTKPTQ), and Lys223. Residues 187 to 192 (KTKPTQ) and Lys223 contribute to the UTP site. An ATP-binding site is contributed by 239 to 241 (KDV). The Glutamine amidotransferase type-1 domain occupies 291-542 (TIGMVGKYIE…VKAASEYQKR (252 aa)). L-glutamine is bound at residue Gly352. Cys379 acts as the Nucleophile; for glutamine hydrolysis in catalysis. Residues 380 to 383 (LGMQ), Glu403, and Arg470 each bind L-glutamine. Active-site residues include His515 and Glu517.

Belongs to the CTP synthase family. As to quaternary structure, homotetramer.

It catalyses the reaction UTP + L-glutamine + ATP + H2O = CTP + L-glutamate + ADP + phosphate + 2 H(+). The catalysed reaction is L-glutamine + H2O = L-glutamate + NH4(+). It carries out the reaction UTP + NH4(+) + ATP = CTP + ADP + phosphate + 2 H(+). It participates in pyrimidine metabolism; CTP biosynthesis via de novo pathway; CTP from UDP: step 2/2. Its activity is regulated as follows. Allosterically activated by GTP, when glutamine is the substrate; GTP has no effect on the reaction when ammonia is the substrate. The allosteric effector GTP functions by stabilizing the protein conformation that binds the tetrahedral intermediate(s) formed during glutamine hydrolysis. Inhibited by the product CTP, via allosteric rather than competitive inhibition. In terms of biological role, catalyzes the ATP-dependent amination of UTP to CTP with either L-glutamine or ammonia as the source of nitrogen. Regulates intracellular CTP levels through interactions with the four ribonucleotide triphosphates. This is CTP synthase from Cronobacter sakazakii (strain ATCC BAA-894) (Enterobacter sakazakii).